A 292-amino-acid polypeptide reads, in one-letter code: Pyridoxal 5'-phosphate synthase subunit PdxS (292 aa).

Aspartate 22 contacts D-ribose 5-phosphate. Catalysis depends on lysine 79, which acts as the Schiff-base intermediate with D-ribose 5-phosphate. Glycine 151 serves as a coordination point for D-ribose 5-phosphate. Arginine 163 contacts D-glyceraldehyde 3-phosphate. D-ribose 5-phosphate contacts are provided by residues glycine 212 and 233 to 234 (GS).

Belongs to the PdxS/SNZ family. As to quaternary structure, in the presence of PdxT, forms a dodecamer of heterodimers.

It catalyses the reaction aldehydo-D-ribose 5-phosphate + D-glyceraldehyde 3-phosphate + L-glutamine = pyridoxal 5'-phosphate + L-glutamate + phosphate + 3 H2O + H(+). The protein operates within cofactor biosynthesis; pyridoxal 5'-phosphate biosynthesis. Its function is as follows. Catalyzes the formation of pyridoxal 5'-phosphate from ribose 5-phosphate (RBP), glyceraldehyde 3-phosphate (G3P) and ammonia. The ammonia is provided by the PdxT subunit. Can also use ribulose 5-phosphate and dihydroxyacetone phosphate as substrates, resulting from enzyme-catalyzed isomerization of RBP and G3P, respectively. The chain is Pyridoxal 5'-phosphate synthase subunit PdxS from Thermoanaerobacter sp. (strain X514).